A 247-amino-acid polypeptide reads, in one-letter code: Phosphoribosylaminoimidazole-succinocarboxamide synthase (247 aa).

Belongs to the SAICAR synthetase family.

It carries out the reaction 5-amino-1-(5-phospho-D-ribosyl)imidazole-4-carboxylate + L-aspartate + ATP = (2S)-2-[5-amino-1-(5-phospho-beta-D-ribosyl)imidazole-4-carboxamido]succinate + ADP + phosphate + 2 H(+). The protein operates within purine metabolism; IMP biosynthesis via de novo pathway; 5-amino-1-(5-phospho-D-ribosyl)imidazole-4-carboxamide from 5-amino-1-(5-phospho-D-ribosyl)imidazole-4-carboxylate: step 1/2. The chain is Phosphoribosylaminoimidazole-succinocarboxamide synthase from Gloeobacter violaceus (strain ATCC 29082 / PCC 7421).